Here is a 471-residue protein sequence, read N- to C-terminus: Alpha-1,3/1,6-mannosyltransferase alg-2 (471 aa).

Residues Asn-178 and Asn-279 are each glycosylated (N-linked (GlcNAc...) asparagine). The helical transmembrane segment at 446–466 threads the bilayer; sequence GMILLVVGAAVAAVAGVISAV.

The protein belongs to the glycosyltransferase group 1 family. Glycosyltransferase 4 subfamily.

It localises to the endoplasmic reticulum membrane. It carries out the reaction a beta-D-Man-(1-&gt;4)-beta-D-GlcNAc-(1-&gt;4)-alpha-D-GlcNAc-diphospho-di-trans,poly-cis-dolichol + GDP-alpha-D-mannose = an alpha-D-Man-(1-&gt;3)-beta-D-Man-(1-&gt;4)-beta-D-GlcNAc-(1-&gt;4)-alpha-D-GlcNAc-diphospho-di-trans,poly-cis-dolichol + GDP + H(+). The catalysed reaction is an alpha-D-Man-(1-&gt;3)-beta-D-Man-(1-&gt;4)-beta-D-GlcNAc-(1-&gt;4)-alpha-D-GlcNAc-diphospho-di-trans,poly-cis-dolichol + GDP-alpha-D-mannose = an alpha-D-Man-(1-&gt;3)-[alpha-D-Man-(1-&gt;6)]-beta-D-Man-(1-&gt;4)-beta-D-GlcNAc-(1-&gt;4)-alpha-D-GlcNAc-diphospho-di-trans,poly-cis-dolichol + GDP + H(+). The protein operates within protein modification; protein glycosylation. In terms of biological role, mannosylates Man(2)GlcNAc(2)-dolichol diphosphate and Man(1)GlcNAc(2)-dolichol diphosphate to form Man(3)GlcNAc(2)-dolichol diphosphate. This Neurospora crassa (strain ATCC 24698 / 74-OR23-1A / CBS 708.71 / DSM 1257 / FGSC 987) protein is Alpha-1,3/1,6-mannosyltransferase alg-2 (alg-2).